The primary structure comprises 262 residues: Homeobox-leucine zipper protein HOX24 (262 aa).

Disordered stretches follow at residues 44–68 and 162–189; these read AAGR…RKRR and LNER…NSVM. Residues 46-62 are compositionally biased toward gly residues; it reads GRGGGDGDGGGGGGGGG. The segment at residues 61–122 is a DNA-binding region (homeobox); sequence GGGERKRRFT…NKRARWRSKQ (62 aa). The segment at 121–165 is leucine-zipper; the sequence is KQIEHDYAALRAQYDALHARVESLRQEKLALAAQVDELRGKLNER.

The protein belongs to the HD-ZIP homeobox family. Class I subfamily. As to expression, expressed in roots and panicles.

Its subcellular location is the nucleus. Functionally, probable transcription factor. The polypeptide is Homeobox-leucine zipper protein HOX24 (HOX24) (Oryza sativa subsp. indica (Rice)).